The sequence spans 451 residues: Chromosomal replication initiator protein DnaA (451 aa).

The interval 1–82 (MENSLWKQCL…RLELQIGSSA (82 aa)) is domain I, interacts with DnaA modulators. Positions 82–114 (AVVAPPRRRQVSVTTPSPSAAADQTPATRSAAS) are domain II. Residues 85 to 112 (APPRRRQVSVTTPSPSAAADQTPATRSA) form a disordered region. Residues 115 to 331 (NLNSNFTFDT…GALRRVVANA (217 aa)) form a domain III, AAA+ region region. The ATP site is built by Gly-159, Gly-161, Lys-162, and Thr-163. Positions 332 to 451 (QFTGQEITVE…YSNLLRTLST (120 aa)) are domain IV, binds dsDNA.

It belongs to the DnaA family. As to quaternary structure, oligomerizes as a right-handed, spiral filament on DNA at oriC.

It localises to the cytoplasm. Functionally, plays an essential role in the initiation and regulation of chromosomal replication. ATP-DnaA binds to the origin of replication (oriC) to initiate formation of the DNA replication initiation complex once per cell cycle. Binds the DnaA box (a 9 base pair repeat at the origin) and separates the double-stranded (ds)DNA. Forms a right-handed helical filament on oriC DNA; dsDNA binds to the exterior of the filament while single-stranded (ss)DNA is stabiized in the filament's interior. The ATP-DnaA-oriC complex binds and stabilizes one strand of the AT-rich DNA unwinding element (DUE), permitting loading of DNA polymerase. After initiation quickly degrades to an ADP-DnaA complex that is not apt for DNA replication. Binds acidic phospholipids. The polypeptide is Chromosomal replication initiator protein DnaA (Alkalilimnicola ehrlichii (strain ATCC BAA-1101 / DSM 17681 / MLHE-1)).